Here is a 160-residue protein sequence, read N- to C-terminus: Nucleotide-binding protein Smal_3487 (160 aa).

This sequence belongs to the YajQ family.

In terms of biological role, nucleotide-binding protein. In Stenotrophomonas maltophilia (strain R551-3), this protein is Nucleotide-binding protein Smal_3487.